Reading from the N-terminus, the 2387-residue chain is Paternally-expressed gene 3 protein (2387 aa).

Positions 44 to 126 constitute an SCAN box domain; the sequence is HQRFRNFLYV…ALLEDYEAMY (83 aa). 4 disordered regions span residues 127 to 194, 262 to 305, 321 to 371, and 392 to 423; these read EPED…RDLA, DGHS…ICEA, ARSS…AFGG, and RYHF…EARR. Basic and acidic residues-rich tracts occupy residues 160–179, 291–305, 321–364, and 404–423; these read SERE…DRWP, PETK…ICEA, ARSS…ERGP, and HDPR…EARR. A C2H2-type 1 zinc finger spans residues 451–473; that stretch reads YVCDECGRSFAVISEFVEHQIVH. Residues 492-542 are disordered; it reads SEAQSRPEGARRSEGAQAAGLAEHRGGQAQEHLRGSGDEEQDEPFLPSPTF. Positions 513–528 are enriched in basic and acidic residues; the sequence is AEHRGGQAQEHLRGSG. C2H2-type zinc fingers lie at residues 555–577 and 610–632; these read YECK…QKIH and YECK…QKTH. Residues 668–690 form a C2H2-type 4; degenerate zinc finger; sequence YDFREGGDAFGRSSDFMEHQKIH. Disordered regions lie at residues 704-747, 764-797, and 820-858; these read PLLH…EARG, FRPP…ESPY, and DHLA…NIER. Residues 711-720 are compositionally biased toward polar residues; it reads MPGSQKSHTI. Residues 846–856 are compositionally biased toward basic residues; the sequence is HQKARAKKKNI. A C2H2-type 5 zinc finger spans residues 884–906; it reads YECLECGEFFVRSSELAEHQKIH. Repeat copies occupy residues 965–973, 974–982, 983–991, 1001–1009, 1010–1018, 1028–1036, 1046–1054, 1055–1063, 1073–1081, 1091–1099, 1109–1117, 1118–1126, 1136–1144, 1145–1153, 1154–1162, 1163–1171, 1172–1180, 1190–1198, 1199–1207, 1217–1225, 1235–1243, 1253–1261, 1280–1288, 1289–1297, 1298–1306, 1307–1315, 1316–1324, 1325–1333, 1334–1342, 1343–1351, 1352–1360, 1361–1369, 1370–1378, 1379–1387, 1388–1396, 1397–1405, 1406–1414, 1415–1423, 1424–1432, 1433–1441, 1442–1450, 1451–1459, 1460–1468, 1469–1477, 1478–1486, 1496–1504, 1505–1513, 1514–1522, 1523–1531, 1532–1540, 1541–1549, 1550–1558, 1559–1567, 1568–1576, 1577–1585, 1586–1594, and 1595–1603. Composition is skewed to polar residues over residues 965–989 and 1001–1020; these read PAQT…TSYT and PAQT…NPAA. Residues 965-1603 are 37 X 9 AA repeat of P-A-Q-T-X-Y-X-X-E; that stretch reads PAQTSYAVEP…EPAQTSYSEE (639 aa). Residues 965 to 1651 are disordered; sequence PAQTSYAVEP…RPDMPRNQPR (687 aa). The segment covering 1046 to 1079 has biased composition (polar residues); it reads PAQTSCIEEPAQTSYTNPAAETSYTEEPAQTSYT. Polar residues-rich tracts occupy residues 1107 to 1178, 1190 to 1206, 1217 to 1242, 1251 to 1484, and 1496 to 1601; these read EEPS…TSYT, PAQT…NYTK, PAQT…NYTV, EEPS…TNYT, and PAQT…TSYS. The C2H2-type 6; degenerate zinc finger occupies 1859-1881; it reads NECKECGECFATVEDLGRHQKIY. Positions 1900–1921 are disordered; sequence LGLDGSPEEELEEQEEPEEPED. Over residues 1905 to 1921 the composition is skewed to acidic residues; it reads SPEEELEEQEEPEEPED. 5 consecutive C2H2-type zinc fingers follow at residues 1924–1946, 1980–2002, 2040–2062, 2097–2119, and 2148–2170; these read YGCK…QKVH, YECP…QKVH, PQCQ…ARGH, YECE…MRVH, and YECK…QKLH. The segment at 2059-2102 is disordered; that stretch reads ARGHAGEGLPDQGQGGAGAAGPGPAPTEPQQDPGEEQRYECETC. Residues 2204-2322 are disordered; it reads NVEAAEPEVE…DCGECGETFP (119 aa). Composition is skewed to acidic residues over residues 2208–2228 and 2257–2311; these read AEPE…EVEA and EQPD…EEPY. C2H2-type zinc fingers lie at residues 2312-2334 and 2363-2385; these read YDCG…LTAH and FKCD…QNTH.

It belongs to the krueppel C2H2-type zinc-finger protein family. Homodimer. Interacts with SIAH1A and SIAH2. Interacts with TRAF2. Expressed at high levels in the cerebellum and at moderate levels in the testis and ovary.

The protein localises to the nucleus. It is found in the cytoplasm. Its function is as follows. Induces apoptosis in cooperation with SIAH1A. Acts as a mediator between p53/TP53 and BAX in a neuronal death pathway that is activated by DNA damage. Acts synergistically with TRAF2 and inhibits TNF induced apoptosis through activation of NF-kappa-B. The chain is Paternally-expressed gene 3 protein (PEG3) from Bos taurus (Bovine).